A 231-amino-acid chain; its full sequence is S-norcoclaurine synthase 2 (231 aa).

Position 107–109 (107–109 (YKE)) interacts with dopamine. The active-site Proton donor is the Lys121. Asp140 lines the (4-hydroxyphenyl)acetaldehyde pocket. The helical transmembrane segment at 210 to 230 (LLLCLIICLVIAGGMFVAGVP) threads the bilayer.

This sequence belongs to the BetVI family. As to expression, expressed in roots, stems and leaves. Detected in flower buds and germinating seeds. Low expression in carpels. Restricted to sieve elements of the phloem adjacent or proximal to laticifers.

Its subcellular location is the endoplasmic reticulum membrane. It is found in the vacuole membrane. The catalysed reaction is (4-hydroxyphenyl)acetaldehyde + dopamine = (S)-norcoclaurine + H2O. The protein operates within alkaloid biosynthesis; (S)-reticuline biosynthesis. Its activity is regulated as follows. Activity doubles within 5 hours of elicitor treatment and continues to increase for at least 80 hours. Functionally, involved in the biosynthesis of (S)-coclaurine, the common precursor of all benzylisoquinoline alkaloids such as morphine, sanguinarine, codeine or papaverine. Condenses dopamine and 4-hydroxyphenylacetaldehyde. This chain is S-norcoclaurine synthase 2, found in Papaver somniferum (Opium poppy).